Reading from the N-terminus, the 437-residue chain is O-acetyl-L-homoserine sulfhydrylase (437 aa).

At Lys-216 the chain carries N6-(pyridoxal phosphate)lysine.

This sequence belongs to the trans-sulfuration enzymes family. Homohexamer. Pyridoxal 5'-phosphate is required as a cofactor.

The enzyme catalyses O-acetyl-L-homoserine + hydrogen sulfide = L-homocysteine + acetate. The catalysed reaction is O-acetyl-L-homoserine + methanethiol = L-methionine + acetate + H(+). The protein operates within amino-acid biosynthesis; L-methionine biosynthesis via de novo pathway; L-homocysteine from O-acetyl-L-homoserine: step 1/1. With respect to regulation, inhibited by methionine and cystathionine. Its function is as follows. Catalyzes the conversion of O-acetyl-L-homoserine (OAH) into homocysteine in the methionine biosynthesis pathway. Can also use dimethyldisulfide and methanethiol as reduced sulfur sources, leading to the direct formation of methionine. Has weak cystathionine gamma-synthase activity. The polypeptide is O-acetyl-L-homoserine sulfhydrylase (Corynebacterium glutamicum (strain ATCC 13032 / DSM 20300 / JCM 1318 / BCRC 11384 / CCUG 27702 / LMG 3730 / NBRC 12168 / NCIMB 10025 / NRRL B-2784 / 534)).